Reading from the N-terminus, the 275-residue chain is Formamidopyrimidine-DNA glycosylase (275 aa).

The active-site Schiff-base intermediate with DNA is P2. E3 serves as the catalytic Proton donor. Catalysis depends on K58, which acts as the Proton donor; for beta-elimination activity. DNA is bound by residues H93, R111, and R156. An FPG-type zinc finger spans residues 241-275 (FVYDRAGQPCRVCGTPVRQIVQGQRSTYFCPTCQR). R265 (proton donor; for delta-elimination activity) is an active-site residue.

Belongs to the FPG family. As to quaternary structure, monomer. Zn(2+) serves as cofactor.

It carries out the reaction Hydrolysis of DNA containing ring-opened 7-methylguanine residues, releasing 2,6-diamino-4-hydroxy-5-(N-methyl)formamidopyrimidine.. The enzyme catalyses 2'-deoxyribonucleotide-(2'-deoxyribose 5'-phosphate)-2'-deoxyribonucleotide-DNA = a 3'-end 2'-deoxyribonucleotide-(2,3-dehydro-2,3-deoxyribose 5'-phosphate)-DNA + a 5'-end 5'-phospho-2'-deoxyribonucleoside-DNA + H(+). Functionally, involved in base excision repair of DNA damaged by oxidation or by mutagenic agents. Acts as a DNA glycosylase that recognizes and removes damaged bases. Has a preference for oxidized purines, such as 7,8-dihydro-8-oxoguanine (8-oxoG). Has AP (apurinic/apyrimidinic) lyase activity and introduces nicks in the DNA strand. Cleaves the DNA backbone by beta-delta elimination to generate a single-strand break at the site of the removed base with both 3'- and 5'-phosphates. In Burkholderia cenocepacia (strain HI2424), this protein is Formamidopyrimidine-DNA glycosylase.